The following is a 164-amino-acid chain: NADH-quinone oxidoreductase subunit I (164 aa).

4Fe-4S ferredoxin-type domains follow at residues leucine 55 to glutamate 85 and threonine 95 to asparagine 124. Residues cysteine 65, cysteine 68, cysteine 71, cysteine 75, cysteine 104, cysteine 107, cysteine 110, and cysteine 114 each coordinate [4Fe-4S] cluster.

This sequence belongs to the complex I 23 kDa subunit family. As to quaternary structure, NDH-1 is composed of 14 different subunits. Subunits NuoA, H, J, K, L, M, N constitute the membrane sector of the complex. [4Fe-4S] cluster is required as a cofactor.

Its subcellular location is the cell inner membrane. The enzyme catalyses a quinone + NADH + 5 H(+)(in) = a quinol + NAD(+) + 4 H(+)(out). Its function is as follows. NDH-1 shuttles electrons from NADH, via FMN and iron-sulfur (Fe-S) centers, to quinones in the respiratory chain. The immediate electron acceptor for the enzyme in this species is believed to be ubiquinone. Couples the redox reaction to proton translocation (for every two electrons transferred, four hydrogen ions are translocated across the cytoplasmic membrane), and thus conserves the redox energy in a proton gradient. In Ruegeria sp. (strain TM1040) (Silicibacter sp.), this protein is NADH-quinone oxidoreductase subunit I.